Reading from the N-terminus, the 470-residue chain is Proton-coupled amino acid transporter 3 (470 aa).

Topologically, residues 1–46 (MSLLGRDYNSELNSLDNGPQSPSESSSSITSENVHPAGEAGLSMMQ) are cytoplasmic. Positions 10–20 (SELNSLDNGPQ) are enriched in polar residues. The disordered stretch occupies residues 10–33 (SELNSLDNGPQSPSESSSSITSEN). The span at 21–31 (SPSESSSSITS) shows a compositional bias: low complexity. A helical transmembrane segment spans residues 47-67 (TLIHLLKCNIGTGLLGLPLAI). Topologically, residues 68-71 (KNAG) are extracellular. Residues 72–92 (LLVGPVSLLAIGVLTVHCMVI) form a helical membrane-spanning segment. The Cytoplasmic portion of the chain corresponds to 93-137 (LLNCAQHLSQRLQKTFVNYGEATMYGLETCPNTWLRAHAVWGRYT). The chain crosses the membrane as a helical span at residues 138–158 (VSFLLVITQLGFCSVYFMFMA). Over 159–185 (DNLQQMVEKAHVTSNICQPREILTLTP) the chain is Extracellular. A helical membrane pass occupies residues 186–206 (ILDIRFYMLIILPFLILLVFI). The Cytoplasmic portion of the chain corresponds to 207 to 210 (QNLK). The helical transmembrane segment at 211–231 (VLSVFSTLANITTLGSMALIF) threads the bilayer. The Extracellular segment spans residues 232–252 (EYIMEGIPYPSNLPLMANWKT). The chain crosses the membrane as a helical span at residues 253–273 (FLLFFGTAIFTFEGVGMVLPL). Over 274–284 (KNQMKHPQQFS) the chain is Cytoplasmic. Residues 285–305 (FVLYLGMSIVIILYILLGTLG) form a helical membrane-spanning segment. The Extracellular portion of the chain corresponds to 306 to 337 (YMKFGSDTQASITLNLPNCWLYQSVKLMYSIG). The helical transmembrane segment at 338 to 358 (IFFTYALQFHVPAEIIIPFAI) threads the bilayer. The Cytoplasmic portion of the chain corresponds to 359 to 367 (SQVSESWAL). A helical membrane pass occupies residues 368-388 (FVDLSVRSALVCLTCVSAILI). At 389–392 (PRLD) the chain is on the extracellular side. A helical transmembrane segment spans residues 393–413 (LVISLVGSVSSSALALIIPAL). Over 414–425 (LEIVIFYSEDMS) the chain is Cytoplasmic. The helical transmembrane segment at 426–446 (CVTIAKDIMISIVGLLGCIFG) threads the bilayer. Residues 447 to 470 (TYQALYELPQPISHSMANSTGVHA) lie on the Extracellular side of the membrane.

It belongs to the amino acid/polyamine transporter 2 family. In terms of tissue distribution, specifically expressed in testis.

The protein resides in the membrane. The polypeptide is Proton-coupled amino acid transporter 3 (SLC36A3) (Homo sapiens (Human)).